Reading from the N-terminus, the 66-residue chain is MPKMKSKRAAKKRFSITASGKVKYKQMNKGHIMTKKSQKRVRRLKKSAILSEADSMKMRKQLLPYG.

It belongs to the bacterial ribosomal protein bL35 family.

The sequence is that of Large ribosomal subunit protein bL35 from Treponema denticola (strain ATCC 35405 / DSM 14222 / CIP 103919 / JCM 8153 / KCTC 15104).